The primary structure comprises 1135 residues: uncharacterized protein (1135 aa).

The N-terminal stretch at 1 to 28 (MALFPRGILIALVLSFVLNLGLVTKIHA) is a signal peptide. The next 7 helical transmembrane spans lie at 332-352 (IVTAFLTLYVMFFGFKLLLAG), 359-379 (EYINFILKIIFVTYFSIGINI), 393-413 (MIQWVFPFLLNGISGLANWVM), 495-515 (MLVSLALSYPLLVISVAAFMV), 522-542 (MISIVILGILAPLFVPMFLFA), 555-575 (MISFLLQPMVVVTFMITMFAV), and 700-720 (IKNIFLALITACFTLYLMYNF).

The protein belongs to the TrbL/VirB6 family.

The protein localises to the cell membrane. This is an uncharacterized protein from Rickettsia typhi (strain ATCC VR-144 / Wilmington).